A 498-amino-acid chain; its full sequence is Protein DETOXIFICATION 30 (498 aa).

A run of 12 helical transmembrane segments spans residues 64–86 (YSLG…AAVS), 91–111 (VIAG…ETLC), 136–156 (VTAV…AFIG), 161–181 (ISSA…AYAV), 197–217 (VMAA…WFVI), 227–247 (LAVV…VYIF), 277–297 (AVML…AGYL), 302–322 (ISVA…MIAI), 349–369 (LVAV…LLIF), 393–413 (ILAV…VAVG), 419–439 (VVAY…GLLL), and 447–467 (VMGI…VLTW).

This sequence belongs to the multi antimicrobial extrusion (MATE) (TC 2.A.66.1) family.

The protein resides in the membrane. The polypeptide is Protein DETOXIFICATION 30 (Arabidopsis thaliana (Mouse-ear cress)).